A 218-amino-acid polypeptide reads, in one-letter code: Pyridoxine/pyridoxamine 5'-phosphate oxidase (218 aa).

Substrate contacts are provided by residues 11–14 (RVEY) and Lys75. FMN is bound by residues 70-75 (RTVLCK), 85-86 (YT), Lys92, and Gln114. Substrate is bound by residues Tyr132, Arg136, and Ser140. Residues 149–150 (QS) and Trp195 contribute to the FMN site. Residue 201–203 (RVH) participates in substrate binding. Arg205 is a binding site for FMN.

The protein belongs to the pyridoxamine 5'-phosphate oxidase family. Homodimer. FMN serves as cofactor.

The enzyme catalyses pyridoxamine 5'-phosphate + O2 + H2O = pyridoxal 5'-phosphate + H2O2 + NH4(+). The catalysed reaction is pyridoxine 5'-phosphate + O2 = pyridoxal 5'-phosphate + H2O2. Its pathway is cofactor metabolism; pyridoxal 5'-phosphate salvage; pyridoxal 5'-phosphate from pyridoxamine 5'-phosphate: step 1/1. The protein operates within cofactor metabolism; pyridoxal 5'-phosphate salvage; pyridoxal 5'-phosphate from pyridoxine 5'-phosphate: step 1/1. In terms of biological role, catalyzes the oxidation of either pyridoxine 5'-phosphate (PNP) or pyridoxamine 5'-phosphate (PMP) into pyridoxal 5'-phosphate (PLP). The chain is Pyridoxine/pyridoxamine 5'-phosphate oxidase from Mycolicibacterium gilvum (strain PYR-GCK) (Mycobacterium gilvum (strain PYR-GCK)).